Reading from the N-terminus, the 1785-residue chain is MQESQTKSMFVSRALEKILADKEVKRPQHSQLRRACQVALDEIKAEIEKQRLGTAAPPKANFIEADKYFLPFELACQSKSPRVVSTSLDCLQKLIAYGHITGNAPDSGAPGKRLIDRIVETICSCFQGPQTDEGVQLQIIKALLTAVTSPHIEIHEGTILQTVRTCYNIYLASKNLINQTTAKATLTQMLNVIFTRMENQVLQEARELEKPIQSKPQSPVIQAAAVSPKFVRLKHSQAQSKPTTPEKTDLTNGEHARSDSGKVSTENGDAPRERGSSLSGTDDGAQEVVKDILEDVVTSAIKEAAEKHGLTEPERVLGELECQECAIPPGVDENSQTNGIADDRQSLSSADNLESDAQGHQVAARFSHVLQKDAFLVFRSLCKLSMKPLGEGPPDPKSHELRSKVVSLQLLLSVLQNAGPVFRTHEMFINAIKQYLCVALSKNGVSSVPDVFELSLAIFLTLLSNFKMHLKMQIEVFFKEIFLNILETSTSSFEHRWMVIQTLTRICADAQCVVDIYVNYDCDLNAANIFERLVNDLSKIAQGRSGHELGMTPLQELSLRKKGLECLVSILKCMVEWSKDLYVNPNHQTSLGQERLTDQEIGDGKGLDMARRCSVTSMESTVSSGTQTTVQDDPEQFEVIKQQKEIIEHGIELFNKKPKRGIQFLQEQGMLGTSVEDIAQFLHQEERLDSTQVGDFLGDSARFNKEVMYAYVDQLDFCEKEFVSALRTFLEGFRLPGEAQKIDRLMEKFAARYIECNQGQTLFASADTAYVLAYSIIMLTTDLHSPQVKNKMTKEQYIKMNRGINDSKDLPEEYLSSIYEEIEGKKIAMKETKELTIATKSTKQNVASEKQRRLLYNLEMEQMAKTAKALMEAVSHAKAPFTSATHLDHVRPMFKLVWTPLLAAYSIGLQNCDDTEVASLCLEGIRCAIRIACIFGMQLERDAYVQALARFSLLTASSSITEMKQKNIDTIKTLITVAHTDGNYLGNSWHEILKCISQLELAQLIGTGVKTRYLSGSGREREGSLKGHTLAGEEFMGLGLGNLVSGGVDKRQMASFQESVGETSSQSVVVAVDRIFTGSTRLDGNAIVDFVRWLCAVSMDELASPHHPRMFSLQKIVEISYYNMNRIRLQWSRIWHVIGDHFNKVGCNPNEDVAIFAVDSLRQLSMKFLEKGELANFRFQKDFLRPFEHIMKKNRSPTIRDMAIRCIAQMVNSQAANIRSGWKNIFAVFHQAASDHDGNIVELAFQTTCHIVTTIFQHHFPAAIDSFQDAVKCLSEFACNAAFPDTSMEAIRLIRFCGKYVSERPRVLQEYTSDDMNVAPGDRVWVRGWFPILFELSCIINRCKLDVRTRGLTVMFEIMKSYGHTFEKHWWQDLFRIVFRIFDNMKLPEQLSEKSEWMTTTCNHALYAICDVFTQFYEALNEVLLSDVFAQLQWCVKQDNEQLARSGTNCLENLVISNGEKFSPEVWDETCNCMLDIFKTTIPHVLLTWRPVGMEEDSSEKHLDVDLDRQSLSSIDKNPSERGQSQLSNPTDDSWKGRPYANQKLFASLLIKCVVQLELIQTIDNIVFYPATSKKEDAEHMVAAQQDTLDADIHIETEDQGMYKYMSSQHLFKLLDCLQESHSFSKAFNSNYEQRTVLWRAGFKGKSKPNLLKQETSSLACCLRILFRMYVDENRRDSWEEIQQRLLTVCSEALAYFITVNSESHREAWTSLLLLLLTKTLKINDEKFKAHASMYYPYLCEIMQFDLIPELRAVLRKFFLRIGVVYKIWIPEEPSQVPAALSPVW.

Residue Met1 is modified to N-acetylmethionine. Residues 2-224 (QESQTKSMFV…KPQSPVIQAA (223 aa)) are DCB; DCB:DCB domain and DCB:HUS domain interaction. Residues Ser214, Ser218, and Ser227 each carry the phosphoserine modification. A disordered region spans residues 232–285 (RLKHSQAQSKPTTPEKTDLTNGEHARSDSGKVSTENGDAPRERGSSLSGTDDGA). Thr244 carries the post-translational modification Phosphothreonine. The segment covering 244-260 (TPEKTDLTNGEHARSDS) has biased composition (basic and acidic residues). A phosphoserine mark is found at Ser277, Ser348, and Ser349. The interval 508 to 528 (ADAQCVVDIYVNYDCDLNAAN) is HUS; DCB:HUS domain interaction. Position 614 is a phosphoserine (Ser614). Thr616 bears the Phosphothreonine mark. Ser617 is modified (phosphoserine). The residue at position 626 (Thr626) is a Phosphothreonine. The region spanning 654–785 (FNKKPKRGIQ…IIMLTTDLHS (132 aa)) is the SEC7 domain. A phosphoserine mark is found at Ser700, Ser1511, Ser1513, Ser1514, Ser1525, Ser1528, Ser1534, and Ser1782. Polar residues predominate over residues 1514–1532 (SIDKNPSERGQSQLSNPTD). The disordered stretch occupies residues 1514–1535 (SIDKNPSERGQSQLSNPTDDSW).

In terms of assembly, homodimer. Interacts with ARFGEF1/BIG1; both proteins are probably part of the same or very similar macromolecular complexes. Interacts with PRKAR1A, PRKAR2A, PRKAR1B, PRKAR2B, PPP1CC, PDE3A, TNFRSF1A, MYCBP and EXOC7. Interacts with GABRB1, GABRB2 and GABRB3. In terms of processing, in vitro phosphorylated by PKA reducing its GEF activity and dephosphorylated by phosphatase PP1. In terms of tissue distribution, expressed in placenta, lung, heart, brain, kidney and pancreas.

The protein localises to the cytoplasm. Its subcellular location is the membrane. The protein resides in the golgi apparatus. It localises to the perinuclear region. It is found in the trans-Golgi network. The protein localises to the endosome. Its subcellular location is the cytoskeleton. The protein resides in the microtubule organizing center. It localises to the centrosome. It is found in the cell projection. The protein localises to the dendrite. Its subcellular location is the cytoplasmic vesicle. The protein resides in the synapse. Inhibited by brefeldin A. In terms of biological role, promotes guanine-nucleotide exchange on ARF1 and ARF3 and to a lower extent on ARF5 and ARF6. Promotes the activation of ARF1/ARF5/ARF6 through replacement of GDP with GTP. Involved in the regulation of Golgi vesicular transport. Required for the integrity of the endosomal compartment. Involved in trafficking from the trans-Golgi network (TGN) to endosomes and is required for membrane association of the AP-1 complex and GGA1. Seems to be involved in recycling of the transferrin receptor from recycling endosomes to the plasma membrane. Probably is involved in the exit of GABA(A) receptors from the endoplasmic reticulum. Involved in constitutive release of tumor necrosis factor receptor 1 via exosome-like vesicles; the function seems to involve PKA and specifically PRKAR2B. Proposed to act as A kinase-anchoring protein (AKAP) and may mediate crosstalk between Arf and PKA pathways. The protein is Brefeldin A-inhibited guanine nucleotide-exchange protein 2 (ARFGEF2) of Homo sapiens (Human).